Here is a 196-residue protein sequence, read N- to C-terminus: UPF0215 protein MM_1007 (196 aa).

This sequence belongs to the UPF0215 family.

This Methanosarcina mazei (strain ATCC BAA-159 / DSM 3647 / Goe1 / Go1 / JCM 11833 / OCM 88) (Methanosarcina frisia) protein is UPF0215 protein MM_1007.